A 360-amino-acid chain; its full sequence is uncharacterized protein (360 aa).

The segment at 193 to 245 (SRHTRPKGQPLSSPKKNSGSAARPSTAIGLCRRSQTPGALQSTGPSNTELEPE) is disordered. Polar residues-rich tracts occupy residues 202–212 (PLSSPKKNSGS) and 225–241 (RSQT…SNTE).

This is an uncharacterized protein from Homo sapiens (Human).